The following is a 260-amino-acid chain: MAKDNSTVRCFQGLLIFGNVIIGCCGIALTAECIFFVSDQHSLYPLLEATDNDDIYGAAWIGIFVGICLFCLSVLGIVGIMKSSRKILLAYFILMFIVYAFEVASCITAATQQDFFTPNLFLKQMLERYQNNSPPNNDDQWKNNGVTKTWDRLMLQDNCCGVNGPSDWQKYTSAFRTENNDADYPWPRQCCVMNNLKEPLNLEACKLGVPGFYHNQGCYELISGPMNRHAWGVAWFGFAILCWTFWVLLGTMFYWSRIEY.

Residues 1–15 are Cytoplasmic-facing; that stretch reads MAKDNSTVRCFQGLL. The chain crosses the membrane as a helical span at residues 16 to 36; that stretch reads IFGNVIIGCCGIALTAECIFF. Topologically, residues 37–60 are extracellular; sequence VSDQHSLYPLLEATDNDDIYGAAW. The helical transmembrane segment at 61 to 81 threads the bilayer; that stretch reads IGIFVGICLFCLSVLGIVGIM. The Cytoplasmic segment spans residues 82 to 86; that stretch reads KSSRK. Residues 87–107 form a helical membrane-spanning segment; sequence ILLAYFILMFIVYAFEVASCI. At 108 to 229 the chain is on the extracellular side; it reads TAATQQDFFT…ELISGPMNRH (122 aa). A helical membrane pass occupies residues 230–250; sequence AWGVAWFGFAILCWTFWVLLG. The Cytoplasmic segment spans residues 251 to 260; that stretch reads TMFYWSRIEY.

It belongs to the tetraspanin (TM4SF) family. In terms of assembly, heterodimer with uroplakin-3A (UPK3A) or uroplakin-3B (UPK3B). In terms of processing, N-glycosylated with high-mannose oligosaccharides. In terms of tissue distribution, bladder epithelium.

It is found in the membrane. In terms of biological role, component of the asymmetric unit membrane (AUM); a highly specialized biomembrane elaborated by terminally differentiated urothelial cells. May play an important role in normal bladder epithelial physiology, possibly in regulating membrane permeability of superficial umbrella cells or in stabilizing the apical membrane through AUM/cytoskeletal interactions. This Homo sapiens (Human) protein is Uroplakin-1b (UPK1B).